Here is a 197-residue protein sequence, read N- to C-terminus: Phosphoheptose isomerase (197 aa).

Residues 36-197 enclose the SIS domain; the sequence is MVNALLNEGK…IDRQLFGSEE (162 aa). 51–53 contributes to the substrate binding site; the sequence is NGG. Zn(2+) contacts are provided by His60 and Glu64. Residues Glu64, 93–94, 119–121, Ser124, and Gln174 contribute to the substrate site; these read ND and STS. Gln174 and His182 together coordinate Zn(2+).

Belongs to the SIS family. GmhA subfamily. Homotetramer. Zn(2+) serves as cofactor.

Its subcellular location is the cytoplasm. The catalysed reaction is 2 D-sedoheptulose 7-phosphate = D-glycero-alpha-D-manno-heptose 7-phosphate + D-glycero-beta-D-manno-heptose 7-phosphate. The protein operates within carbohydrate biosynthesis; D-glycero-D-manno-heptose 7-phosphate biosynthesis; D-glycero-alpha-D-manno-heptose 7-phosphate and D-glycero-beta-D-manno-heptose 7-phosphate from sedoheptulose 7-phosphate: step 1/1. Its function is as follows. Catalyzes the isomerization of sedoheptulose 7-phosphate in D-glycero-D-manno-heptose 7-phosphate. The sequence is that of Phosphoheptose isomerase from Pseudomonas aeruginosa (strain LESB58).